We begin with the raw amino-acid sequence, 54 residues long: Ovomucoid (54 aa).

In terms of domain architecture, Kazal-like spans 4 to 54 (VDCSDYPKPVCPLDYMPLCGSDSKTYSNKCNFCNAVVESSGTLTLRHFGKC). Disulfide bonds link C6–C36, C14–C33, and C22–C54.

Post-translationally, this is the only ovomucoid third domain known to be not glycosylated.

Its subcellular location is the secreted. This Struthio camelus (Common ostrich) protein is Ovomucoid.